A 241-amino-acid chain; its full sequence is Terpene cyclase pyr4 (241 aa).

A run of 7 helical transmembrane segments spans residues 20-40 (IADW…LAMI), 49-69 (YGMA…YSVI), 79-99 (AVLT…IKFA), 113-133 (LPWI…ALAA), 141-161 (ANWG…CQLM), 168-188 (GASY…GIFL), and 206-226 (FVTW…TFLW).

Belongs to the paxB family.

Its subcellular location is the membrane. It catalyses the reaction 2-oxo-3-[(8S)-epoxy-(2E,6E)-farnesyl]-6-(pyridin-3-yl)-2H-pyran-4-olate + H(+) = deacetylpyripyropene E. It functions in the pathway secondary metabolite biosynthesis; terpenoid biosynthesis. Terpene cyclase; part of the gene cluster that mediates the biosynthesis of pyripyropene A, a specific human acyl-coenzyme A:cholesterol acyltransferase 2 inhibitor. The first step of the pathway is the synthesis of nicotinyl-CoA from nicotinic acid by the nicotinic acid-CoA ligase pyr1. Nicotinyl-CoA is then a substrate of polyketide synthase pyr2 to produce 4-hydroxy-6-(3-pyridinyl)-2H-pyran-2-one (HPPO) which is further prenylated by the polyprenyl transferase pyr6 to yield farnesyl-HPPO. The next steps consist of an epoxidation of farnesyl-HPPO to epoxyfarnesyl-HPPO by FAD-dependent monooxygenase pyr5 and a cyclization of the terpenoid portion by the terpene cyclase pyr4 to yield deacetyl-pyripyropene E. The 2 cytochrome P450 monooxygenases pyr3 and pyr9, and the 2 acetyltransferases pyr7 and pyr8 are involved in the conversion of deacetyl-pyripyropene E into pyripyropene A through several cycles of oxidation and acetylation steps. Pyr7 acetylates deacetyl-pyripyropene E to pyripyropene E which is oxidized to 11-deacetyl-pyripyropene O by pyr3, which is in turn acetylated into pyripyropene O by pyr8. Pyripyropene O is then oxidized to deacetyl-pyripyropene A by pyr9. Deacetyl-pyripyropene A is finally acetylated to pyripyropene A by pyr8. The chain is Terpene cyclase pyr4 from Aspergillus fumigatus (strain ATCC MYA-4609 / CBS 101355 / FGSC A1100 / Af293) (Neosartorya fumigata).